The chain runs to 792 residues: Ribosome biogenesis protein BOP1 homolog (792 aa).

The span at 1–11 shows a compositional bias: basic residues; it reads MTKKRTVKRKV. A disordered region spans residues 1 to 167; sequence MTKKRTVKRK…ESDTSDEEDI (167 aa). Acidic residues-rich tracts occupy residues 44–53, 60–72, 82–117, and 157–166; these read EDTTDDEGID, SSED…DEEG, EAEE…ESDA, and EESDTSDEED. WD repeat units lie at residues 453 to 494, 496 to 534, 578 to 620, 623 to 661, 664 to 703, 707 to 746, and 762 to 792; these read GHTD…RTIE, NDVV…KLLI, THFK…SQIP, KSKG…LIKK, TNSK…KPYQ, LHRN…DLLQ, and RDEF…RLYT.

It belongs to the WD repeat BOP1/ERB1 family.

It localises to the nucleus. The protein localises to the nucleolus. Its subcellular location is the nucleoplasm. Functionally, required for maturation of ribosomal RNAs and formation of the large ribosomal subunit. The protein is Ribosome biogenesis protein BOP1 homolog of Drosophila mojavensis (Fruit fly).